Reading from the N-terminus, the 146-residue chain is Cytidine deaminase (146 aa).

The CMP/dCMP-type deaminase domain maps to 13–140; the sequence is ECVQQLLVCS…ELLPSSFGPE (128 aa). 54 to 60 serves as a coordination point for substrate; the sequence is NIENACY. Cysteine 65 contacts Zn(2+). Residue glutamate 67 is the Proton donor of the active site. Residues cysteine 99 and cysteine 102 each coordinate Zn(2+).

Belongs to the cytidine and deoxycytidylate deaminase family. As to quaternary structure, homotetramer. Zn(2+) is required as a cofactor. As to expression, highly expressed in granulocytes while expression is very low in fibroblasts, chondrocytes, monocytes, and T- as well as B-cell lines.

The enzyme catalyses cytidine + H2O + H(+) = uridine + NH4(+). It carries out the reaction 2'-deoxycytidine + H2O + H(+) = 2'-deoxyuridine + NH4(+). In terms of biological role, this enzyme scavenges exogenous and endogenous cytidine and 2'-deoxycytidine for UMP synthesis. The chain is Cytidine deaminase from Homo sapiens (Human).